The primary structure comprises 116 residues: Protein Wnt-5a (116 aa).

Residue serine 1 is the site of O-palmitoleoyl serine; by PORCN attachment. Asparagine 69 and asparagine 83 each carry an N-linked (GlcNAc...) asparagine glycan. A disulfide bond links cysteine 82 and cysteine 97.

The protein belongs to the Wnt family. Palmitoleoylation is required for efficient binding to frizzled receptors. Depalmitoleoylation leads to Wnt signaling pathway inhibition.

The protein localises to the secreted. The protein resides in the extracellular space. It is found in the extracellular matrix. Functionally, ligand for members of the frizzled family of seven transmembrane receptors. Can activate or inhibit canonical Wnt signaling, depending on receptor context. Required during embryogenesis for extension of the primary anterior-posterior axis. The sequence is that of Protein Wnt-5a (WNT-5A) from Plestiodon skiltonianus (Western skink).